Reading from the N-terminus, the 877-residue chain is MAAERYNPRVAEAHWQKVWEENRTFETDNSDSREKYYVLEMFPYPSGRIHMGHVRNYAMGDVVARYKRAKGFNVLHPMGWDAFGMPAENAAMQNKVHPKEWTYQNIATMKRQLKSMGLSLDWSREFATCDVEYYHRQQMLFIDLYEKGLVTRKTSKVNWDPVDNTVLANEQVVDGRGWRSGALVEQRELTQWFFKITDFSEELLAGLDTLDQWPEKVRLMQRNWIGKSEGLQVRFALAAGTAPAGFSEVEVYTTRPDTLFGAAFVAISADHPLAKKLSEGNAALSSFIEECHQQGTSLAALETAEKKGFDTGIKVKHPFDDNWELPVYVANFVLMEYGTGAVFGCPAHDQRDLDFANKYKLKVTPVVLPKGEDAASFSIGETAYTDDGVMINSRFLDGMTPEAAFNEVASRLEKTDLVGRPQAVRKVQFRLRDWGISRQRYWGCPIPMIHCESCGVNPVPRADLPVKLPDDVEFDRPGNPLDRHATWRHVKCPKCGGDARRETDTMDTFVDSSWYYTRFTAPWENEPTDRKAADHWLPVDQYIGGIEHAILHLLYSRFFTRAMKVAGHVGVDEPFKGLFTQGMVVHETYKANGQWVSPADIRIEEIDGKRVATMLDSGAPVEIGSIEKMSKSKKNVVDPDDIIASYGADTARWFVLSDSPPERDVIWTEAGAEGAHRFVQRIWRLVAEAAPALKDVAPKAGTQGEALGVSKAAHKAVKAVGDDIEKLAFNRGVARLYELVNTLSGALQQAADGKADAEMKGALREATEMLVLMTAPMMPHLAEQCLAELGGKVAGKETLVARAPWPVFDPALVVENEIVLPVQINGKKRGDLTIARDADQASIQQAVLELDFVKAALNGGSPKKIIVVPQRIVNVVA.

Positions 43–53 (PYPSGRIHMGH) match the 'HIGH' region motif. The 'KMSKS' region motif lies at 628–632 (KMSKS). An ATP-binding site is contributed by K631.

It belongs to the class-I aminoacyl-tRNA synthetase family.

Its subcellular location is the cytoplasm. It catalyses the reaction tRNA(Leu) + L-leucine + ATP = L-leucyl-tRNA(Leu) + AMP + diphosphate. This chain is Leucine--tRNA ligase, found in Brucella melitensis biotype 2 (strain ATCC 23457).